The chain runs to 270 residues: uncharacterized protein (270 aa).

A run of 10 helical transmembrane segments spans residues Ala12–Gly32, Thr35–Leu55, Thr64–Gln84, Val88–Leu108, Thr117–Glu137, Leu138–Leu158, Ile171–Gly191, Gly194–Phe214, Ala226–Gly246, and Thr248–Trp268. EamA domains are found at residues Val19 to Thr133 and Leu150 to Arg269.

The protein belongs to the EamA transporter family.

The protein localises to the cell membrane. This is an uncharacterized protein from Archaeoglobus fulgidus (strain ATCC 49558 / DSM 4304 / JCM 9628 / NBRC 100126 / VC-16).